A 150-amino-acid chain; its full sequence is Putative transmembrane protein DDB_G0277665 (150 aa).

The next 2 helical transmembrane spans lie at 4-24 (TLII…FNIL) and 42-62 (VIVG…FLPL).

The protein resides in the membrane. The polypeptide is Putative transmembrane protein DDB_G0277665 (Dictyostelium discoideum (Social amoeba)).